The primary structure comprises 31 residues: MALSDTQILAALVVALLPAFLAFRLSTELYK.

The helical transmembrane segment at 6 to 25 (TQILAALVVALLPAFLAFRL) threads the bilayer.

It belongs to the PsaM family.

It localises to the cellular thylakoid membrane. The polypeptide is Photosystem I reaction center subunit XII (Synechocystis sp. (strain ATCC 27184 / PCC 6803 / Kazusa)).